We begin with the raw amino-acid sequence, 189 residues long: ADP-ribosylation factor H (189 aa).

GTP contacts are provided by residues 34 to 40 (DGAGKST), 75 to 79 (DVGGQ), and 134 to 137 (NKQD).

This sequence belongs to the small GTPase superfamily. Arf family.

It is found in the golgi apparatus. GTP-binding protein that may be involved in protein trafficking. May modulate vesicle budding and uncoating within the Golgi apparatus. The chain is ADP-ribosylation factor H (arrH) from Dictyostelium discoideum (Social amoeba).